Consider the following 33-residue polypeptide: Trypsin inhibitor 1 (33 aa).

Cystine bridges form between Cys-1/Cys-17, Cys-8/Cys-21, and Cys-16/Cys-32.

Expressed in leaves and fruit flesh (at protein level).

In terms of biological role, inhibits trypsin (IC(50)=471 nM). This chain is Trypsin inhibitor 1, found in Beta vulgaris subsp. vulgaris (Beet).